Here is a 198-residue protein sequence, read N- to C-terminus: 5'-deoxynucleotidase ETA_12010 (198 aa).

Residues 18–19 (RW) and His-33 each bind substrate. Residues 30-142 (VSEHSLQVAM…VKQADALCAY (113 aa)) form the HD domain. His-33, His-68, and Asp-69 together coordinate a divalent metal cation. Substrate is bound by residues Asp-69, 77-80 (DLPT), and Asp-137. A divalent metal cation is bound at residue Asp-137.

The protein belongs to the 5DNU family. Homodimer. A divalent metal cation serves as cofactor.

The protein resides in the cytoplasm. The catalysed reaction is a 2'-deoxyribonucleoside 5'-phosphate + H2O = a 2'-deoxyribonucleoside + phosphate. Functionally, catalyzes the strictly specific dephosphorylation of 2'-deoxyribonucleoside 5'-monophosphates. In Erwinia tasmaniensis (strain DSM 17950 / CFBP 7177 / CIP 109463 / NCPPB 4357 / Et1/99), this protein is 5'-deoxynucleotidase ETA_12010.